Here is a 234-residue protein sequence, read N- to C-terminus: Octanoyltransferase (234 aa).

The BPL/LPL catalytic domain occupies 42-226 (PDTPDEFWVV…ELASLIGYET (185 aa)). Residues 81 to 88 (RGGQVTYH), 157 to 159 (SLG), and 170 to 172 (GLA) contribute to the substrate site. Cys188 (acyl-thioester intermediate) is an active-site residue.

This sequence belongs to the LipB family.

Its subcellular location is the cytoplasm. It catalyses the reaction octanoyl-[ACP] + L-lysyl-[protein] = N(6)-octanoyl-L-lysyl-[protein] + holo-[ACP] + H(+). It participates in protein modification; protein lipoylation via endogenous pathway; protein N(6)-(lipoyl)lysine from octanoyl-[acyl-carrier-protein]: step 1/2. Its function is as follows. Catalyzes the transfer of endogenously produced octanoic acid from octanoyl-acyl-carrier-protein onto the lipoyl domains of lipoate-dependent enzymes. Lipoyl-ACP can also act as a substrate although octanoyl-ACP is likely to be the physiological substrate. The chain is Octanoyltransferase from Aeromonas hydrophila subsp. hydrophila (strain ATCC 7966 / DSM 30187 / BCRC 13018 / CCUG 14551 / JCM 1027 / KCTC 2358 / NCIMB 9240 / NCTC 8049).